A 66-amino-acid polypeptide reads, in one-letter code: Alpha-actitoxin-Ms11a-2 (66 aa).

The first 24 residues, 1-24, serve as a signal peptide directing secretion; it reads MASKIFFVLAVFLVMSAVLPESFA. Intrachain disulfides connect Cys26–Cys41, Cys33–Cys46, and Cys40–Cys61.

Its subcellular location is the secreted. The protein resides in the nematocyst. Its function is as follows. Alpha-toxins act on postsynaptic membranes, they bind to the nicotinic acetylcholine receptors (nAChR) and thus inhibit them. This toxin competes with alpha-bungarotoxin for binding to orthosteric sites on muscle-type T.carlifornicus (IC(50)=1080 nM) and human alpha-7/CHRNA7 nAChRs (IC(50)=14.13 uM). This chain is Alpha-actitoxin-Ms11a-2, found in Metridium senile (Brown sea anemone).